The chain runs to 834 residues: MAP kinase phosphatase with leucine-rich repeats protein 1 (834 aa).

A disordered region spans residues 1-103 (MIFKKLFSKG…GSGTTKESKK (103 aa)). Over residues 36 to 78 (GSGTNTNGLSNSTTNPSSIHSTPTTPTTTASTNLTNSNKLSTL) the composition is skewed to low complexity. The segment covering 79 to 98 (APITNGNRSLRGSKDGSGTT) has biased composition (polar residues). LRR repeat units follow at residues 160–181 (ELRS…IGLL), 183–204 (NLKH…LSQL), 206–226 (SLES…NICK), 229–251 (SLTL…INLE), 252–273 (NLKD…LPNN), 274–292 (IEKL…SKSL), 298–319 (SLTT…LSCL), 321–342 (NVKT…VLGS), 345–366 (SLVT…IVTL), and 368–389 (NLRI…PSSE). The tract at residues 503 to 584 (YEKQENDENN…ENPLKESQGK (82 aa)) is disordered. Positions 511–536 (NNSVTLETTTTISIASDNTDEASIQI) are enriched in polar residues. Basic and acidic residues-rich tracts occupy residues 538-554 (QKED…DKLL) and 569-582 (KQQE…KESQ). The stretch at 555-615 (QESFSENNNN…IRLEKIKYQE (61 aa)) forms a coiled coil. In terms of domain architecture, Tyrosine-protein phosphatase spans 695–834 (VPDLIIDKLY…LKKFEKDLSK (140 aa)). C778 (phosphocysteine intermediate) is an active-site residue.

This sequence belongs to the protein-tyrosine phosphatase family. Non-receptor class dual specificity subfamily.

The catalysed reaction is O-phospho-L-tyrosyl-[protein] + H2O = L-tyrosyl-[protein] + phosphate. It carries out the reaction O-phospho-L-seryl-[protein] + H2O = L-seryl-[protein] + phosphate. It catalyses the reaction O-phospho-L-threonyl-[protein] + H2O = L-threonyl-[protein] + phosphate. In terms of biological role, probable phosphatase with dual specificity toward Ser/Thr and Tyr-containing proteins. Dephosphorylates pNPP, in vitro. Essential for proper regulation of erkB (erk2) and optimal motility during development. The polypeptide is MAP kinase phosphatase with leucine-rich repeats protein 1 (mpl1) (Dictyostelium discoideum (Social amoeba)).